The sequence spans 228 residues: Ankyrin repeat domain-containing protein 46 (228 aa).

4 ANK repeats span residues 11–40, 44–73, 77–103, and 107–138; these read QTNV…DPNI, RGRT…DLLA, QGNT…KIDI, and QGAT…EVKG. The chain crosses the membrane as a helical span at residues 195–215; that stretch reads VLLLIFVIALLSLGIAYYVSG.

Its subcellular location is the membrane. The polypeptide is Ankyrin repeat domain-containing protein 46 (ANKRD46) (Pongo abelii (Sumatran orangutan)).